The primary structure comprises 244 residues: UDP-2,3-diacylglucosamine hydrolase (244 aa).

The Mn(2+) site is built by aspartate 8, histidine 10, aspartate 41, asparagine 79, and histidine 114. 79–80 (NR) contacts substrate. Residues aspartate 122, serine 160, asparagine 164, lysine 167, and histidine 195 each coordinate substrate. The Mn(2+) site is built by histidine 195 and histidine 197.

This sequence belongs to the LpxH family. The cofactor is Mn(2+).

The protein localises to the cell inner membrane. It catalyses the reaction UDP-2-N,3-O-bis[(3R)-3-hydroxytetradecanoyl]-alpha-D-glucosamine + H2O = 2-N,3-O-bis[(3R)-3-hydroxytetradecanoyl]-alpha-D-glucosaminyl 1-phosphate + UMP + 2 H(+). The protein operates within glycolipid biosynthesis; lipid IV(A) biosynthesis; lipid IV(A) from (3R)-3-hydroxytetradecanoyl-[acyl-carrier-protein] and UDP-N-acetyl-alpha-D-glucosamine: step 4/6. Functionally, hydrolyzes the pyrophosphate bond of UDP-2,3-diacylglucosamine to yield 2,3-diacylglucosamine 1-phosphate (lipid X) and UMP by catalyzing the attack of water at the alpha-P atom. Involved in the biosynthesis of lipid A, a phosphorylated glycolipid that anchors the lipopolysaccharide to the outer membrane of the cell. The sequence is that of UDP-2,3-diacylglucosamine hydrolase from Marinobacter nauticus (strain ATCC 700491 / DSM 11845 / VT8) (Marinobacter aquaeolei).